A 608-amino-acid polypeptide reads, in one-letter code: Nuclear receptor subfamily 2 group C member 1 (608 aa).

The interval 1 to 179 (MASIEEIAHQ…RLQRCIAFGM (179 aa)) is required for interaction with KAT2B. A DNA-binding region (nuclear receptor) is located at residues 111–186 (FDLCVVCGDK…FGMKQDSVQC (76 aa)). 2 consecutive NR C4-type zinc fingers follow at residues 114–134 (CVVC…CEGC) and 150–169 (CRGS…CQYC). A phosphoserine mark is found at S198 and S216. The residue at position 221 (T221) is a Phosphothreonine. A Phosphothreonine; by MAPK1 modification is found at T223. A Glycyl lysine isopeptide (Lys-Gly) (interchain with G-Cter in SUMO); alternate cross-link involves residue K251. A Glycyl lysine isopeptide (Lys-Gly) (interchain with G-Cter in SUMO2); alternate cross-link involves residue K251. Residues 353–595 (GNVHLIAGDS…SVIPHILKME (243 aa)) enclose the NR LBD domain. S586 carries the phosphoserine; by PKC modification. Positions 589–608 (PHILKMEPADYNSQIIGHSI) are required for interaction with NRIP1. Residue K593 forms a Glycyl lysine isopeptide (Lys-Gly) (interchain with G-Cter in SUMO2) linkage.

The protein belongs to the nuclear hormone receptor family. NR2 subfamily. As to quaternary structure, homodimer. Heterodimer; with NR2C2 which is required for chromatin remodeling and for binding to promoter regions such as globin DR1 repeats. Interacts with ESR1; the interaction prevents homodimerization of ESR1 and suppresses its transcriptional activity and cell growth. Interacts with NRIP1 (via its LXXLL motifs); the interaction provides corepressor activity. Interacts with HDAC3 (via the DNA-binding domain); the interaction recruits phosphorylated NR2C1 to PML bodies for sumoylation. Interacts with HDAC4 (via the DNA-binding domain). Interacts with PIAS1; the interaction is required for sumoylation of NR2C1. Interacts with UBE2I; the interaction is required for sumoylation of NR2C1. Interacts with KAT2B; the interaction acts as a corepressor of gene expression. In terms of processing, sumoylation requires both PIAS1 and UBE2I. Sumoylation appears to dissociate NR2C1 from the PML nuclear bodies. Enhances the interaction with NRIP1 but inhibits interaction with KAT2B. In proliferating cells, stimulation by all-trans retinoic acid, activation of MAPK1-mediated phosphorylation and recruitment to PML bodies with subsequent sumoylation, suppresses OCT4 expression. Post-translationally, phosphorylated on several serine and threonine residues. Phosphorylation on Thr-223, stimulated by all-trans retinoic acid (atRA) mediates PML location and sumoylation in proliferating cells which then modulates its association with effector molecules, KAT2B and NRIP1. Phosphorylation on Ser-586 by PKC is important for protein stability and function as activator of RARB.

The protein resides in the nucleus. Its subcellular location is the PML body. In terms of biological role, orphan nuclear receptor. Binds the IR7 element in the promoter of its own gene in an autoregulatory negative feedback mechanism. Primarily repressor of a broad range of genes including ESR1 and RARB. Together with NR2C2, forms the core of the DRED (direct repeat erythroid-definitive) complex that represses embryonic and fetal globin transcription. Binds to hormone response elements (HREs) consisting of two 5'-AGGTCA-3' half site direct repeat consensus sequences. Also activator of OCT4 gene expression. Plays a fundamental role in early embryogenesis and regulates embryonic stem cell proliferation and differentiation. Mediator of retinoic acid-regulated preadipocyte proliferation. The protein is Nuclear receptor subfamily 2 group C member 1 (NR2C1) of Bos taurus (Bovine).